Consider the following 202-residue polypeptide: MSNNPGKLIIFEGTDGAGKSTQIKMLANYLRSKGLDVIASFEPTNGPYGQKIRQLYTDRNKVTRNEELELFLADRREHVNKLINPAISAGKIVLCDRYYLSTAAYQGALGFDVEEILQRNSFAPTPDLALLLQIPVEDGRRRITSSRGEETNDFEKAEMLEKVSTIFNSLSFPYIRHINACQSIDNVQRDIIMQVKQLLKMA.

13 to 20 serves as a coordination point for ATP; it reads GTDGAGKS.

Belongs to the thymidylate kinase family.

The catalysed reaction is dTMP + ATP = dTDP + ADP. Phosphorylation of dTMP to form dTDP in both de novo and salvage pathways of dTTP synthesis. The sequence is that of Thymidylate kinase from Desulfotalea psychrophila (strain LSv54 / DSM 12343).